Consider the following 158-residue polypeptide: NAD(P)H-quinone oxidoreductase subunit J, chloroplastic (158 aa).

The protein belongs to the complex I 30 kDa subunit family. As to quaternary structure, NDH is composed of at least 16 different subunits, 5 of which are encoded in the nucleus.

The protein localises to the plastid. It localises to the chloroplast thylakoid membrane. The enzyme catalyses a plastoquinone + NADH + (n+1) H(+)(in) = a plastoquinol + NAD(+) + n H(+)(out). It carries out the reaction a plastoquinone + NADPH + (n+1) H(+)(in) = a plastoquinol + NADP(+) + n H(+)(out). NDH shuttles electrons from NAD(P)H:plastoquinone, via FMN and iron-sulfur (Fe-S) centers, to quinones in the photosynthetic chain and possibly in a chloroplast respiratory chain. The immediate electron acceptor for the enzyme in this species is believed to be plastoquinone. Couples the redox reaction to proton translocation, and thus conserves the redox energy in a proton gradient. The sequence is that of NAD(P)H-quinone oxidoreductase subunit J, chloroplastic from Nuphar advena (Common spatterdock).